The following is a 530-amino-acid chain: Autoinducer-2 kinase (530 aa).

The protein belongs to the FGGY kinase family.

The protein localises to the cytoplasm. The catalysed reaction is (S)-4,5-dihydroxypentane-2,3-dione + ATP = (2S)-2-hydroxy-3,4-dioxopentyl phosphate + ADP + H(+). In terms of biological role, catalyzes the phosphorylation of autoinducer-2 (AI-2) to phospho-AI-2, which subsequently inactivates the transcriptional regulator LsrR and leads to the transcription of the lsr operon. Phosphorylates the ring-open form of (S)-4,5-dihydroxypentane-2,3-dione (DPD), which is the precursor to all AI-2 signaling molecules, at the C5 position. This chain is Autoinducer-2 kinase, found in Enterobacter sp. (strain 638).